Consider the following 63-residue polypeptide: DNA-directed RNA polymerase subunit omega (63 aa).

It belongs to the RNA polymerase subunit omega family. In terms of assembly, the RNAP catalytic core consists of 2 alpha, 1 beta, 1 beta' and 1 omega subunit. When a sigma factor is associated with the core the holoenzyme is formed, which can initiate transcription.

The catalysed reaction is RNA(n) + a ribonucleoside 5'-triphosphate = RNA(n+1) + diphosphate. In terms of biological role, promotes RNA polymerase assembly. Latches the N- and C-terminal regions of the beta' subunit thereby facilitating its interaction with the beta and alpha subunits. This is DNA-directed RNA polymerase subunit omega from Blochmanniella pennsylvanica (strain BPEN).